The primary structure comprises 400 residues: Tyrosine--tRNA ligase 2 (400 aa).

The 'HIGH' region motif lies at proline 46–histidine 55. The 'KMSKS' region motif lies at lysine 230 to serine 234. Lysine 233 is a binding site for ATP. The region spanning asparagine 339–valine 399 is the S4 RNA-binding domain.

Belongs to the class-I aminoacyl-tRNA synthetase family. TyrS type 2 subfamily. Homodimer.

The protein localises to the cytoplasm. It catalyses the reaction tRNA(Tyr) + L-tyrosine + ATP = L-tyrosyl-tRNA(Tyr) + AMP + diphosphate + H(+). In terms of biological role, catalyzes the attachment of tyrosine to tRNA(Tyr) in a two-step reaction: tyrosine is first activated by ATP to form Tyr-AMP and then transferred to the acceptor end of tRNA(Tyr). In Clostridium acetobutylicum (strain ATCC 824 / DSM 792 / JCM 1419 / IAM 19013 / LMG 5710 / NBRC 13948 / NRRL B-527 / VKM B-1787 / 2291 / W), this protein is Tyrosine--tRNA ligase 2.